The following is an 852-amino-acid chain: Gamma-tubulin complex component 2 homolog (852 aa).

Ser-73 carries the phosphoserine modification.

This sequence belongs to the TUBGCP family. In terms of assembly, gamma-tubulin small complex (Gamma TuSC) is a heterotetrameric complex which contains two molecules of gamma-tubulin, and one molecule each of Dgrip84 and Dgrip91. The gamma-tubulin in this complex binds preferentially to GDP over GTP.

The protein localises to the cytoplasm. The protein resides in the cytoskeleton. It is found in the microtubule organizing center. Its subcellular location is the centrosome. It localises to the perinuclear region. The polypeptide is Gamma-tubulin complex component 2 homolog (Grip84) (Drosophila melanogaster (Fruit fly)).